We begin with the raw amino-acid sequence, 447 residues long: Divalent metal cation transporter MntH (447 aa).

A run of 11 helical transmembrane segments spans residues 26-48, 65-85, 108-128, 140-160, 169-189, 212-232, 264-284, 304-324, 359-379, 383-403, and 426-446; these read AGFW…GYMD, TLLS…AMSA, GFLL…AEII, IPLI…LLLM, AIVA…VLLS, MLYL…LYLG, LFLA…LFYG, IVGA…LLAS, VLSV…EAKI, LTFS…PLVI, and TATI…LGLI.

Belongs to the NRAMP family.

It is found in the cell membrane. H(+)-stimulated, divalent metal cation uptake system. The polypeptide is Divalent metal cation transporter MntH (Pediococcus pentosaceus (strain ATCC 25745 / CCUG 21536 / LMG 10740 / 183-1w)).